A 305-amino-acid chain; its full sequence is MAAAGREKGYVTQTAAALDKSPSLSPQLAAPIRGRPKKCLVYPHAPKSSRLSRSVLRWLQGLDLSFFPRNINRDFSNGFLIAEIFCIYYPWELELSSFENGTSLKVKLGNWAQLEKFLARKKFKLPKELIHGTIHCKAGVPEILIEEVYTLLTHREIKSIQDDFVNFTDYSYQMRLPLVSRSTVSKSIKDNIRLSELLSNPNMLTNELKAEFLILLHMLQRKLGRKLNPEWFDVKPTVGEVTLNHLPAQASGRRYNLKVKRGRVVPVLPNIGSGGSSHREIHVKQAGQHSYYSAMKPIRNMDKKP.

One can recognise a Calponin-homology (CH) domain in the interval 49–155; the sequence is SRLSRSVLRW…EEVYTLLTHR (107 aa).

It is found in the nucleus. May play a role in apoptosis regulation. This is Spermatogenesis-associated protein 4 (SPATA4) from Pan troglodytes (Chimpanzee).